The following is a 410-amino-acid chain: MSEIKLGDQWFIIVSDPQKQRGDKSSSGSYVTYQISSKPATEGDKRSGEDDITVVHRRYSDFVLLYQILANDYPACIVPPLPDKKVLNYLDRFSQSFTQKRCHSLQNFLQRLAQHPVLSQSKILHTFLVSSDWDAYQKSLAETVGNLSNKEELTETIMNAFKSVHSQSDEFVEIKEKSGKLDHNVSKIDKLFHRVVKKQEAIAEDYGKLGLSLRELQELVTTGDDRNSEVGNLGTKIKTFNEGMAQLSYSLRDLSRYIDYEYIIDLRDMEDYIDSMKQLIKLKDQKQIDYEELSDYLTRSINEKNNLISGYGSGSNFFKSKLEEFTGINQEAARREKISKLESKVQALTTEVENAKKVADAFEKEALKEVEIFEQIKTRELKRSLTTLADHHIEFYQKMVNTWSKIEESL.

The PX domain maps to 11–135 (FIIVSDPQKQ…TFLVSSDWDA (125 aa)). A 1,2-diacyl-sn-glycero-3-phospho-(1D-myo-inositol-3-phosphate)-binding residues include Arg-58, Ser-60, Lys-84, and Arg-101. Residues 329–368 (NQEAARREKISKLESKVQALTTEVENAKKVADAFEKEALK) are a coiled coil.

Belongs to the sorting nexin family.

It is found in the cytoplasm. The protein localises to the cytosol. It localises to the preautophagosomal structure membrane. Its subcellular location is the endosome membrane. Functionally, sorting nexin, involved in the separation or division of vacuoles throughout the entire life cycle of the cells. Involved in retrieval of late-Golgi SNAREs from post-Golgi endosomes to the trans-Golgi network, for cytoplasm to vacuole transport (Cvt), and autophagy of large cargos including mitophagy, pexophagy and glycophagy. In Eremothecium gossypii (strain ATCC 10895 / CBS 109.51 / FGSC 9923 / NRRL Y-1056) (Yeast), this protein is Sorting nexin-4 (SNX4).